The sequence spans 194 residues: Imidazoleglycerol-phosphate dehydratase (194 aa).

The protein belongs to the imidazoleglycerol-phosphate dehydratase family.

Its subcellular location is the cytoplasm. It catalyses the reaction D-erythro-1-(imidazol-4-yl)glycerol 3-phosphate = 3-(imidazol-4-yl)-2-oxopropyl phosphate + H2O. The protein operates within amino-acid biosynthesis; L-histidine biosynthesis; L-histidine from 5-phospho-alpha-D-ribose 1-diphosphate: step 6/9. The polypeptide is Imidazoleglycerol-phosphate dehydratase (Halalkalibacterium halodurans (strain ATCC BAA-125 / DSM 18197 / FERM 7344 / JCM 9153 / C-125) (Bacillus halodurans)).